A 412-amino-acid polypeptide reads, in one-letter code: AT-rich interactive domain-containing protein 3C (412 aa).

Residues 1-23 (MEALQKQQAARLAQGVGPLAPAC) are compositionally biased toward low complexity. Residues 1–96 (MEALQKQQAA…SSQPPGLHPH (96 aa)) form a disordered region. Positions 50–73 (AEEEEDAEEDEEKREEAGAEEEAA) are enriched in acidic residues. Residues 78-87 (PGAQGPSSPS) are compositionally biased toward low complexity. The 93-residue stretch at 113–205 (DPKRKEFLDD…YLYPYECETR (93 aa)) folds into the ARID domain. Disordered stretches follow at residues 232–278 (TPLF…AHAC) and 388–412 (PVPASQGPTNPAPPPSTGPPSSILP). The segment covering 259 to 272 (TQSSPGPAQGSTSG) has biased composition (polar residues). An REKLES domain is found at 304 to 389 (LALGPTREKL…GVLFARRQPV (86 aa)).

As to quaternary structure, interacts (via REKLES DOMAIN) with NPM1; the interaction mediates ARID3C nuclear shuttling.

The protein localises to the nucleus. Its function is as follows. Transcription factor involved in monocyte-to-macrophage differentiation. Forms a complex with NPM1 to translocate to the nucleus, acting as a transcription factor that promotes the expression of the genes involved in macrophage differentiation, such as STAT3, STAT1 and JUNB. The polypeptide is AT-rich interactive domain-containing protein 3C (Homo sapiens (Human)).